Reading from the N-terminus, the 2497-residue chain is Highly reducing polyketide synthase aurA (2497 aa).

The region spanning proline 3–serine 437 is the Ketosynthase family 3 (KS3) domain. Residues cysteine 175, histidine 314, and histidine 357 each act as for beta-ketoacyl synthase activity in the active site. Residues isoleucine 575–glycine 896 are malonyl-CoA:ACP transacylase (MAT) domain. Residue serine 669 is the For malonyltransferase activity of the active site. The interval histidine 965 to methionine 1095 is N-terminal hotdog fold. A dehydratase (DH) domain region spans residues histidine 965 to glutamine 1255. Residues histidine 965–serine 1259 enclose the PKS/mFAS DH domain. The active-site Proton acceptor; for dehydratase activity is histidine 997. A C-terminal hotdog fold region spans residues methionine 1110–serine 1259. Aspartate 1166 (proton donor; for dehydratase activity) is an active-site residue. Residues asparagine 1399–leucine 1594 are methyltransferase (CMet) domain. The interval lysine 2150–isoleucine 2294 is ketoreductase (KR) domain. One can recognise a Carrier domain in the interval glutamate 2409–isoleucine 2487. O-(pantetheine 4'-phosphoryl)serine is present on serine 2447.

The cofactor is pantetheine 4'-phosphate.

Its pathway is polyketide biosynthesis. Highly reducing polyketide synthase (HR-PKS); part of the gene cluster that mediates the biosynthesis of aurovertins, fungal polyketides that exhibit potent inhibition of adenosine triphosphate synthase. Tha biosynthesis starts with the HR-PKS aurA that selects propionate as the starter unit; synthesizes a hexa-ene chain through the repeated functions of the KR and DH domains in the first six iterations; selectively introduces three alpha-methyl substitutions at C4, C6, and C16 using the S-adensylmethionine-dependent cMET; and shuts off KR and DH in the last three iterations to afford a 1,3,5-triketo portion that can undergo intramolecular cyclization to yield the alpha-pyrone intermediate. AurE may act as a cyclase and enhances the rate of pyrone formation and product release of aurA. The methyltransferase aurB then methylates the C17 hydroxyl group. C17 methylation is required to initiate epoxidation by the downstream monooxygenase aurC. The monooxygenase aurC and the epoxide hydrolase aurD can iteratively transform the terminal triene portion of the methylated precursor into the dioxabicyclo[3.2.1]octane scaffold of aurovertin E. Epoxidation modifications of the precursor occur in two separate steps; bis-epoxidation of the two terminal olefins takes place first, followed by another epoxidation that occurs at C7-C8 after tetrahydrofuran formation. The O-acyltransferase aurG converts aurovertin E to aurovertin A. The sequence is that of Highly reducing polyketide synthase aurA from Calcarisporium arbuscula (Dendryphion arbuscula).